A 168-amino-acid polypeptide reads, in one-letter code: GTP-dependent dephospho-CoA kinase (168 aa).

The GTP site is built by aspartate 49, valine 50, valine 51, aspartate 68, lysine 70, and glutamate 120.

This sequence belongs to the GTP-dependent DPCK family.

The enzyme catalyses 3'-dephospho-CoA + GTP = GDP + CoA + H(+). The protein operates within cofactor biosynthesis; coenzyme A biosynthesis. Catalyzes the GTP-dependent phosphorylation of the 3'-hydroxyl group of dephosphocoenzyme A to form coenzyme A (CoA). In Pyrobaculum calidifontis (strain DSM 21063 / JCM 11548 / VA1), this protein is GTP-dependent dephospho-CoA kinase.